Here is a 763-residue protein sequence, read N- to C-terminus: Protein translocase subunit SecA 2 (763 aa).

ATP contacts are provided by residues Gln-83, Gly-101–Thr-105, and Asp-490.

It belongs to the SecA family. As to quaternary structure, monomer and homodimer. Part of the essential Sec protein translocation apparatus which comprises SecA, SecYEG and auxiliary proteins SecDF. Other proteins may also be involved.

The protein resides in the cell membrane. Its subcellular location is the cytoplasm. The enzyme catalyses ATP + H2O + cellular proteinSide 1 = ADP + phosphate + cellular proteinSide 2.. Part of the Sec protein translocase complex. Interacts with the SecYEG preprotein conducting channel. Has a central role in coupling the hydrolysis of ATP to the transfer of proteins into and across the cell membrane, serving as an ATP-driven molecular motor driving the stepwise translocation of polypeptide chains across the membrane. This chain is Protein translocase subunit SecA 2, found in Corynebacterium glutamicum (strain R).